The primary structure comprises 315 residues: Carbamate kinase (315 aa).

The protein belongs to the carbamate kinase family. Homodimer.

It localises to the cytoplasm. The enzyme catalyses hydrogencarbonate + NH4(+) + ATP = carbamoyl phosphate + ADP + H2O + H(+). This Thermococcus kodakarensis (strain ATCC BAA-918 / JCM 12380 / KOD1) (Pyrococcus kodakaraensis (strain KOD1)) protein is Carbamate kinase (cpkA).